We begin with the raw amino-acid sequence, 212 residues long: Redox-sensing transcriptional repressor Rex (212 aa).

Residues 18 to 57 (LYYRFVNTLKSKGIDRVNSKAISEALNIESATIRRDFSYF) constitute a DNA-binding region (H-T-H motif). Residue 92–97 (GVGNLG) participates in NAD(+) binding.

It belongs to the transcriptional regulatory Rex family. As to quaternary structure, homodimer.

Its subcellular location is the cytoplasm. In terms of biological role, modulates transcription in response to changes in cellular NADH/NAD(+) redox state. The polypeptide is Redox-sensing transcriptional repressor Rex (Staphylococcus haemolyticus (strain JCSC1435)).